The following is a 222-amino-acid chain: Chorionic somatomammotropin hormone-like 1 (222 aa).

A signal peptide spans 1-26 (MAAGSRTSLLLAFALLCLPWLQEAGA). Residues histidine 44 and glutamate 205 each coordinate Zn(2+). Cysteines 213 and 220 form a disulfide.

This sequence belongs to the somatotropin/prolactin family.

Its subcellular location is the secreted. Its function is as follows. May be a novel gestational hormone required to compensate for absence of other members of the GH/CS cluster during gestation. This chain is Chorionic somatomammotropin hormone-like 1 (CSHL1), found in Homo sapiens (Human).